We begin with the raw amino-acid sequence, 864 residues long: DNA mismatch repair protein MutS (864 aa).

613 to 620 (GPNMGGKS) contributes to the ATP binding site.

This sequence belongs to the DNA mismatch repair MutS family.

Its function is as follows. This protein is involved in the repair of mismatches in DNA. It is possible that it carries out the mismatch recognition step. This protein has a weak ATPase activity. The protein is DNA mismatch repair protein MutS of Actinobacillus pleuropneumoniae serotype 3 (strain JL03).